The chain runs to 220 residues: tRNA (guanine-N(7)-)-methyltransferase (220 aa).

S-adenosyl-L-methionine-binding residues include E44, E69, D96, and D118. The active site involves D118. Residue K122 participates in substrate binding. The tract at residues 124-129 (RHEKRR) is interaction with RNA. Residues D154 and 191–194 (TEYE) each bind substrate.

It belongs to the class I-like SAM-binding methyltransferase superfamily. TrmB family.

It catalyses the reaction guanosine(46) in tRNA + S-adenosyl-L-methionine = N(7)-methylguanosine(46) in tRNA + S-adenosyl-L-homocysteine. It participates in tRNA modification; N(7)-methylguanine-tRNA biosynthesis. Its function is as follows. Catalyzes the formation of N(7)-methylguanine at position 46 (m7G46) in tRNA. This is tRNA (guanine-N(7)-)-methyltransferase from Halalkalibacterium halodurans (strain ATCC BAA-125 / DSM 18197 / FERM 7344 / JCM 9153 / C-125) (Bacillus halodurans).